Consider the following 32-residue polypeptide: TPSQCTAAQANKCCTGLTNGILNLNVLPALNP.

The protein is Allergen Asp fl 1 of Aspergillus flavus.